Consider the following 1161-residue polypeptide: Type IV pilus biogenesis factor PilY1 (1161 aa).

The N-terminal stretch at 1-30 is a signal peptide; that stretch reads MKSVLHQIGKTSLAAALSGAVLLSAQTTHA. 4 residues coordinate Ca(2+): aspartate 598, aspartate 600, asparagine 602, and aspartate 606. Residues 617-619 form an integrin-binding motif RGD region; that stretch reads RGD. The Ca(2+) site is built by aspartate 849, asparagine 851, aspartate 853, valine 855, and aspartate 857. The segment at 1136–1161 is disordered; sequence SGECLTVNPGPNTRGRQNWRPIEGKN.

This sequence belongs to the PilY1 family. As to quaternary structure, interacts (via C-terminus) with host integrins alpha-V/beta-3 (ITGAV/ITGB3) and alpha-V/beta-5 (ITGAV/ITGB5).

Its subcellular location is the fimbrium. It is found in the membrane. The protein localises to the cytoplasm. It localises to the cytosol. In terms of biological role, involved in pilus assembly, twitching motility and adhesion to host cells. Primes type IV pili (T4P) assembly and is required for inclusion of minor pilins PilV, PilW and PilX to the surface pili. Stabilizes assembled pilus fibers likely by antagonizing retraction mediated by PilT. Calcium-binding and calcium release by PilY1 seem to be essential for twitching motility and for regulation of pilus retraction dynamics of PilT. The sequence is that of Type IV pilus biogenesis factor PilY1 from Pseudomonas aeruginosa (strain ATCC 15692 / DSM 22644 / CIP 104116 / JCM 14847 / LMG 12228 / 1C / PRS 101 / PAO1).